Consider the following 456-residue polypeptide: tRNA modification GTPase MnmE (456 aa).

(6S)-5-formyl-5,6,7,8-tetrahydrofolate is bound by residues Arg21, Glu85, and Lys124. The TrmE-type G domain maps to 220 to 379 (QLRIVLYGEP…LLDEIQKKAA (160 aa)). Asn230 is a binding site for K(+). Residues 230–235 (NTGKSS), 249–255 (SEIPGTT), and 274–277 (DTAG) each bind GTP. Ser234 contributes to the Mg(2+) binding site. K(+) is bound by residues Ser249, Ile251, and Thr254. Residue Thr255 coordinates Mg(2+). Lys456 is a binding site for (6S)-5-formyl-5,6,7,8-tetrahydrofolate.

It belongs to the TRAFAC class TrmE-Era-EngA-EngB-Septin-like GTPase superfamily. TrmE GTPase family. Homodimer. Heterotetramer of two MnmE and two MnmG subunits. The cofactor is K(+).

Its subcellular location is the cytoplasm. Its function is as follows. Exhibits a very high intrinsic GTPase hydrolysis rate. Involved in the addition of a carboxymethylaminomethyl (cmnm) group at the wobble position (U34) of certain tRNAs, forming tRNA-cmnm(5)s(2)U34. This Leptospira borgpetersenii serovar Hardjo-bovis (strain JB197) protein is tRNA modification GTPase MnmE.